The chain runs to 161 residues: tRNA-specific adenosine deaminase (161 aa).

The region spanning 2–120 (TQDELYMKEA…GTLMNLLQEE (119 aa)) is the CMP/dCMP-type deaminase domain. His-53 is a binding site for Zn(2+). Glu-55 serves as the catalytic Proton donor. The Zn(2+) site is built by Cys-83 and Cys-86.

Belongs to the cytidine and deoxycytidylate deaminase family. As to quaternary structure, homodimer. Requires Zn(2+) as cofactor.

The enzyme catalyses adenosine(34) in tRNA + H2O + H(+) = inosine(34) in tRNA + NH4(+). Functionally, catalyzes the deamination of adenosine to inosine at the wobble position 34 of tRNA(Arg2). The chain is tRNA-specific adenosine deaminase from Bacillus subtilis (strain 168).